A 194-amino-acid polypeptide reads, in one-letter code: Peptidyl-tRNA hydrolase (194 aa).

Tyr17 is a tRNA binding site. His22 serves as the catalytic Proton acceptor. 3 residues coordinate tRNA: Phe68, Asn70, and Asn116.

Belongs to the PTH family. As to quaternary structure, monomer.

The protein localises to the cytoplasm. It carries out the reaction an N-acyl-L-alpha-aminoacyl-tRNA + H2O = an N-acyl-L-amino acid + a tRNA + H(+). Its function is as follows. Hydrolyzes ribosome-free peptidyl-tRNAs (with 1 or more amino acids incorporated), which drop off the ribosome during protein synthesis, or as a result of ribosome stalling. In terms of biological role, catalyzes the release of premature peptidyl moieties from peptidyl-tRNA molecules trapped in stalled 50S ribosomal subunits, and thus maintains levels of free tRNAs and 50S ribosomes. The polypeptide is Peptidyl-tRNA hydrolase (Shewanella sediminis (strain HAW-EB3)).